Consider the following 425-residue polypeptide: Dihydroorotase (425 aa).

2 residues coordinate Zn(2+): His56 and His58. Substrate contacts are provided by residues 58-60 (HYR) and Asn90. Asp148, His175, and His228 together coordinate Zn(2+). A substrate-binding site is contributed by Asn274. Asp301 contributes to the Zn(2+) binding site. Residue Asp301 is part of the active site. Substrate-binding positions include His305 and 319–320 (FG).

This sequence belongs to the metallo-dependent hydrolases superfamily. DHOase family. Class I DHOase subfamily. Zn(2+) is required as a cofactor.

The catalysed reaction is (S)-dihydroorotate + H2O = N-carbamoyl-L-aspartate + H(+). Its pathway is pyrimidine metabolism; UMP biosynthesis via de novo pathway; (S)-dihydroorotate from bicarbonate: step 3/3. Functionally, catalyzes the reversible cyclization of carbamoyl aspartate to dihydroorotate. This is Dihydroorotase from Lactobacillus johnsonii (strain CNCM I-12250 / La1 / NCC 533).